The chain runs to 1403 residues: DNA-directed RNA polymerase subunit beta' (1403 aa).

Cys68, Cys70, Cys83, and Cys86 together coordinate Zn(2+). Positions 459, 461, and 463 each coordinate Mg(2+). Zn(2+)-binding residues include Cys814, Cys887, Cys894, and Cys897.

The protein belongs to the RNA polymerase beta' chain family. The RNAP catalytic core consists of 2 alpha, 1 beta, 1 beta' and 1 omega subunit. When a sigma factor is associated with the core the holoenzyme is formed, which can initiate transcription. It depends on Mg(2+) as a cofactor. Zn(2+) is required as a cofactor.

The enzyme catalyses RNA(n) + a ribonucleoside 5'-triphosphate = RNA(n+1) + diphosphate. In terms of biological role, DNA-dependent RNA polymerase catalyzes the transcription of DNA into RNA using the four ribonucleoside triphosphates as substrates. The chain is DNA-directed RNA polymerase subunit beta' from Solibacter usitatus (strain Ellin6076).